The chain runs to 1393 residues: Rab3 GTPase-activating protein non-catalytic subunit (1393 aa).

Residues 36–67 (RDPSKSTDWEDDGWGAWEENEPQEPEEEGNTC) are disordered. A Phosphoserine modification is found at serine 39. Residues 44-64 (WEDDGWGAWEENEPQEPEEEG) show a composition bias toward acidic residues. Serine 450 is subject to Phosphoserine. Phosphothreonine is present on threonine 901. Residues serine 916 and serine 978 each carry the phosphoserine modification.

Belongs to the Rab3-GAP regulatory subunit family. In terms of assembly, the Rab3 GTPase-activating complex is a heterodimer composed of RAB3GAP1 and RAB3GAP2. The Rab3 GTPase-activating complex interacts with DMXL2. Interacts with LMAN1. Ubiquitous.

The protein resides in the cytoplasm. The protein localises to the endoplasmic reticulum. Functionally, regulatory subunit of the Rab3 GTPase-activating (Rab3GAP) complex composed of RAB3GAP1 and RAB3GAP2, which has GTPase-activating protein (GAP) activity towards various Rab3 subfamily members (RAB3A, RAB3B, RAB3C and RAB3D), RAB5A and RAB43, and guanine nucleotide exchange factor (GEF) activity towards RAB18. As part of the Rab3GAP complex, acts as a GAP for Rab3 proteins by converting active RAB3-GTP to the inactive form RAB3-GDP. Rab3 proteins are involved in regulated exocytosis of neurotransmitters and hormones. The Rab3GAP complex acts as a GEF for RAB18 by promoting the conversion of inactive RAB18-GDP to the active form RAB18-GTP. Recruits and stabilizes RAB18 at the cis-Golgi membrane in human fibroblasts where RAB18 is most likely activated. Also involved in RAB18 recruitment at the endoplasmic reticulum (ER) membrane where it maintains proper ER structure. Required for normal eye and brain development. May participate in neurodevelopmental processes such as proliferation, migration and differentiation before synapse formation, and non-synaptic vesicular release of neurotransmitters. The polypeptide is Rab3 GTPase-activating protein non-catalytic subunit (Homo sapiens (Human)).